The sequence spans 221 residues: Large ribosomal subunit protein uL4 (221 aa).

The interval Gly-47–Ser-77 is disordered.

Belongs to the universal ribosomal protein uL4 family. In terms of assembly, part of the 50S ribosomal subunit.

Its function is as follows. One of the primary rRNA binding proteins, this protein initially binds near the 5'-end of the 23S rRNA. It is important during the early stages of 50S assembly. It makes multiple contacts with different domains of the 23S rRNA in the assembled 50S subunit and ribosome. Functionally, forms part of the polypeptide exit tunnel. The sequence is that of Large ribosomal subunit protein uL4 from Thermosipho melanesiensis (strain DSM 12029 / CIP 104789 / BI429).